The chain runs to 604 residues: DNA polymerase alpha subunit B (604 aa).

The interval 109–171 (ETLLNSYTTP…KYSSRSNRGE (63 aa)) is disordered. The segment covering 113 to 141 (NSYTTPSKGSQKRTITTPETPLTKRSVSA) has biased composition (polar residues). Phosphothreonine occurs at positions 129 and 132. Ser-143, Ser-149, Ser-154, and Ser-156 each carry phosphoserine. Over residues 143 to 160 (SPHQLLSPSSFSPSATPP) the composition is skewed to low complexity.

This sequence belongs to the DNA polymerase alpha subunit B family. Component of the alpha DNA polymerase complex (also known as the alpha DNA polymerase-primase complex) consisting of four subunits: the catalytic subunit POLA1, the regulatory subunit POLA2, and the primase complex subunits PRIM1 and PRIM2 respectively. Within the complex, POLA1 directly interacts with PRIM2. In terms of processing, phosphorylated in a cell cycle-dependent manner, in G2/M phase.

The protein localises to the nucleus. In terms of biological role, accessory subunit of the DNA polymerase alpha complex (also known as the alpha DNA polymerase-primase complex) which plays an essential role in the initiation of DNA synthesis. During the S phase of the cell cycle, the DNA polymerase alpha complex (composed of a catalytic subunit POLA1, an accessory subunit POLA2 and two primase subunits, the catalytic subunit PRIM1 and the regulatory subunit PRIM2) is recruited to DNA at the replicative forks via direct interactions with MCM10 and WDHD1. The primase subunit of the polymerase alpha complex initiates DNA synthesis by oligomerising short RNA primers on both leading and lagging strands. These primers are initially extended by the polymerase alpha catalytic subunit and subsequently transferred to polymerase delta and polymerase epsilon for processive synthesis on the lagging and leading strand, respectively. The chain is DNA polymerase alpha subunit B (POLA2) from Bos taurus (Bovine).